The following is a 147-amino-acid chain: Large ribosomal subunit protein uL15 (147 aa).

Residues 1-15 (MKLHELKPAKGAVKE) show a composition bias toward basic and acidic residues. Positions 1–47 (MKLHELKPAKGAVKEVKRKGRGRATGNGKTAGRGHNGQNSRSGGGVR) are disordered. Residues 23 to 35 (RATGNGKTAGRGH) are compositionally biased toward gly residues.

This sequence belongs to the universal ribosomal protein uL15 family. As to quaternary structure, part of the 50S ribosomal subunit.

In terms of biological role, binds to the 23S rRNA. The polypeptide is Large ribosomal subunit protein uL15 (Alkaliphilus metalliredigens (strain QYMF)).